The chain runs to 359 residues: Photosystem II protein D1 1 (359 aa).

The next 3 membrane-spanning stretches (helical) occupy residues 29–46, 118–133, and 142–156; these read YVGWFGVLMIPTLLAATT, HFLIGIFCYMGREWEL, and WICVAYSAPVAAASA. Chlorophyll a is bound at residue H118. Y126 contributes to the pheophytin a binding site. [CaMn4O5] cluster is bound by residues D170 and E189. A helical transmembrane segment spans residues 197 to 218; sequence FHMMGVAGVFGGSLFSAMHGSL. Chlorophyll a is bound at residue H198. Residues H215 and 264–265 contribute to the a quinone site; that span reads SF. H215 contacts Fe cation. H272 serves as a coordination point for Fe cation. Residues 274–288 traverse the membrane as a helical segment; the sequence is FLAAWPVVGIWFTAL. 4 residues coordinate [CaMn4O5] cluster: H332, E333, D342, and A344. Residues 345–359 constitute a propeptide that is removed on maturation; that stretch reads AAESTPVALQAPAIG.

Belongs to the reaction center PufL/M/PsbA/D family. As to quaternary structure, PSII is composed of 1 copy each of membrane proteins PsbA, PsbB, PsbC, PsbD, PsbE, PsbF, PsbH, PsbI, PsbJ, PsbK, PsbL, PsbM, PsbT, PsbX, PsbY, PsbZ, Psb30/Ycf12, peripheral proteins PsbO, CyanoQ (PsbQ), PsbU, PsbV and a large number of cofactors. It forms dimeric complexes. The cofactor is The D1/D2 heterodimer binds P680, chlorophylls that are the primary electron donor of PSII, and subsequent electron acceptors. It shares a non-heme iron and each subunit binds pheophytin, quinone, additional chlorophylls, carotenoids and lipids. D1 provides most of the ligands for the Mn4-Ca-O5 cluster of the oxygen-evolving complex (OEC). There is also a Cl(-1) ion associated with D1 and D2, which is required for oxygen evolution. The PSII complex binds additional chlorophylls, carotenoids and specific lipids.. Post-translationally, tyr-161 forms a radical intermediate that is referred to as redox-active TyrZ, YZ or Y-Z. In terms of processing, C-terminally processed by CtpA; processing is essential to allow assembly of the oxygen-evolving complex and thus photosynthetic growth.

Its subcellular location is the cellular thylakoid membrane. The catalysed reaction is 2 a plastoquinone + 4 hnu + 2 H2O = 2 a plastoquinol + O2. Functionally, photosystem II (PSII) is a light-driven water:plastoquinone oxidoreductase that uses light energy to abstract electrons from H(2)O, generating O(2) and a proton gradient subsequently used for ATP formation. It consists of a core antenna complex that captures photons, and an electron transfer chain that converts photonic excitation into a charge separation. The D1/D2 (PsbA/PsbD) reaction center heterodimer binds P680, the primary electron donor of PSII as well as several subsequent electron acceptors. The chain is Photosystem II protein D1 1 from Synechococcus sp. (strain WH7803).